Here is a 686-residue protein sequence, read N- to C-terminus: Tripartite terminase subunit 3 (686 aa).

Positions 219-226 match the Walker A motif motif; it reads IPRRHGKT. The Walker B motif motif lies at 314–319; the sequence is LLYVDE. The active-site For ATPase activity is Glu319. Active-site for nuclease activity residues include Asp475, Glu548, and Asp660.

Belongs to the herpesviridae TRM3 protein family. As to quaternary structure, interacts with the terminase subunits TRM1 and TRM2. Interacts with portal protein.

The protein resides in the host nucleus. Component of the molecular motor that translocates viral genomic DNA in empty capsid during DNA packaging. Forms a tripartite terminase complex together with TRM1 and TRM2 in the host cytoplasm. Once the complex reaches the host nucleus, it interacts with the capsid portal vertex. This portal forms a ring in which genomic DNA is translocated into the capsid. TRM3 carries an RNase H-like nuclease activity that plays an important role for the cleavage of concatemeric viral DNA into unit length genomes. This chain is Tripartite terminase subunit 3, found in Equine herpesvirus 2 (strain 86/87) (EHV-2).